The primary structure comprises 335 residues: UPF0353 protein Mjls_2492 (335 aa).

2 consecutive transmembrane segments (helical) span residues 18–38 (WFFL…IVAL) and 67–87 (LPAI…AGPT). Positions 98 to 294 (VVMLVIDVSQ…EQLREVYANL (197 aa)) constitute a VWFA domain. A helical membrane pass occupies residues 309 to 329 (VGWLRLGALVLALSALAALLL).

The protein belongs to the UPF0353 family.

It localises to the cell membrane. This Mycobacterium sp. (strain JLS) protein is UPF0353 protein Mjls_2492.